The primary structure comprises 367 residues: Probable dual-specificity RNA methyltransferase RlmN (367 aa).

Glutamate 92 acts as the Proton acceptor in catalysis. The region spanning 98-326 (QEYGLSVCVT…YDTLKKNGIN (229 aa)) is the Radical SAM core domain. Cysteines 105 and 341 form a disulfide. [4Fe-4S] cluster-binding residues include cysteine 112, cysteine 116, and cysteine 119. S-adenosyl-L-methionine-binding positions include 164–165 (GE), serine 196, 219–221 (SLH), and asparagine 297. Cysteine 341 functions as the S-methylcysteine intermediate in the catalytic mechanism.

It belongs to the radical SAM superfamily. RlmN family. [4Fe-4S] cluster is required as a cofactor.

The protein localises to the cytoplasm. The catalysed reaction is adenosine(2503) in 23S rRNA + 2 reduced [2Fe-2S]-[ferredoxin] + 2 S-adenosyl-L-methionine = 2-methyladenosine(2503) in 23S rRNA + 5'-deoxyadenosine + L-methionine + 2 oxidized [2Fe-2S]-[ferredoxin] + S-adenosyl-L-homocysteine. It carries out the reaction adenosine(37) in tRNA + 2 reduced [2Fe-2S]-[ferredoxin] + 2 S-adenosyl-L-methionine = 2-methyladenosine(37) in tRNA + 5'-deoxyadenosine + L-methionine + 2 oxidized [2Fe-2S]-[ferredoxin] + S-adenosyl-L-homocysteine. Specifically methylates position 2 of adenine 2503 in 23S rRNA and position 2 of adenine 37 in tRNAs. In Listeria innocua serovar 6a (strain ATCC BAA-680 / CLIP 11262), this protein is Probable dual-specificity RNA methyltransferase RlmN.